The sequence spans 148 residues: Putative pre-16S rRNA nuclease (148 aa).

It belongs to the YqgF nuclease family.

Its subcellular location is the cytoplasm. Functionally, could be a nuclease involved in processing of the 5'-end of pre-16S rRNA. This chain is Putative pre-16S rRNA nuclease, found in Chromohalobacter salexigens (strain ATCC BAA-138 / DSM 3043 / CIP 106854 / NCIMB 13768 / 1H11).